A 56-amino-acid chain; its full sequence is Large ribosomal subunit protein bL32 (56 aa).

Residues 1–21 form a disordered region; that stretch reads MAVQKNKPTRSKRGMRRSHDA. Residues 7-16 show a composition bias toward basic residues; it reads KPTRSKRGMR.

This sequence belongs to the bacterial ribosomal protein bL32 family.

The chain is Large ribosomal subunit protein bL32 from Hamiltonella defensa subsp. Acyrthosiphon pisum (strain 5AT).